Reading from the N-terminus, the 307-residue chain is Protoheme IX farnesyltransferase (307 aa).

8 helical membrane-spanning segments follow: residues 32 to 52, 65 to 85, 108 to 128, 131 to 151, 158 to 178, 186 to 206, 251 to 271, and 287 to 307; these read MGIV…ALHF, FFTI…NNYI, PGFA…FLLL, PMAV…YSLW, LNTV…WAAI, IAWM…LALA, LGIT…VLGF, and FVYS…VTFF.

This sequence belongs to the UbiA prenyltransferase family. Protoheme IX farnesyltransferase subfamily. In terms of assembly, interacts with CtaA.

It localises to the cell membrane. It carries out the reaction heme b + (2E,6E)-farnesyl diphosphate + H2O = Fe(II)-heme o + diphosphate. The protein operates within porphyrin-containing compound metabolism; heme O biosynthesis; heme O from protoheme: step 1/1. Its function is as follows. Converts heme B (protoheme IX) to heme O by substitution of the vinyl group on carbon 2 of heme B porphyrin ring with a hydroxyethyl farnesyl side group. This is Protoheme IX farnesyltransferase from Bacillus cereus (strain ATCC 10987 / NRS 248).